Consider the following 291-residue polypeptide: Transmembrane O-methyltransferase (291 aa).

A helical membrane pass occupies residues 31–51 (VGTMSPAIALAFLPLVVTLLV). S-adenosyl-L-methionine contacts are provided by residues E137, 139–140 (GT), S145, E163, and S193.

It belongs to the class I-like SAM-binding methyltransferase superfamily. Cation-dependent O-methyltransferase family. Interacts with LHFPL5, PCDH15, TMC1, TMC2 and TMIE. Interacts directly with TMC1. The interaction of TOMT with TMC1 and TMC2 is required for the transportation of TMC1/2 into the stereocilia of hair cells.

The protein resides in the membrane. It is found in the cytoplasm. The protein localises to the endoplasmic reticulum. It catalyses the reaction a catechol + S-adenosyl-L-methionine = a guaiacol + S-adenosyl-L-homocysteine + H(+). Functionally, catalyzes the O-methylation, and thereby the inactivation, of catecholamine neurotransmitters and catechol hormones. Required for auditory function. Component of the cochlear hair cell's mechanotransduction (MET) machinery. Involved in the assembly of the asymmetric tip-link MET complex. Required for transportation of TMC1 and TMC2 proteins into the mechanically sensitive stereocilia of the hair cells. The function in MET is independent of the enzymatic activity. This chain is Transmembrane O-methyltransferase, found in Homo sapiens (Human).